The chain runs to 468 residues: 3-isopropylmalate dehydratase large subunit (468 aa).

Positions 347, 408, and 411 each coordinate [4Fe-4S] cluster.

Belongs to the aconitase/IPM isomerase family. LeuC type 1 subfamily. In terms of assembly, heterodimer of LeuC and LeuD. The cofactor is [4Fe-4S] cluster.

The enzyme catalyses (2R,3S)-3-isopropylmalate = (2S)-2-isopropylmalate. The protein operates within amino-acid biosynthesis; L-leucine biosynthesis; L-leucine from 3-methyl-2-oxobutanoate: step 2/4. In terms of biological role, catalyzes the isomerization between 2-isopropylmalate and 3-isopropylmalate, via the formation of 2-isopropylmaleate. This is 3-isopropylmalate dehydratase large subunit from Methylobacillus flagellatus (strain ATCC 51484 / DSM 6875 / VKM B-1610 / KT).